Reading from the N-terminus, the 690-residue chain is Guanylate cyclase soluble subunit alpha-1 (690 aa).

Ser266 carries the phosphoserine modification. In terms of domain architecture, Guanylate cyclase spans 480–607 (TMLFSDIVGF…NNVTLANKFE (128 aa)).

This sequence belongs to the adenylyl cyclase class-4/guanylyl cyclase family. In terms of assembly, the active enzyme is formed by a heterodimer of an alpha and a beta subunit. Heterodimer with GUCY1B1. The cofactor is Mg(2+). It depends on Mn(2+) as a cofactor.

It localises to the cytoplasm. It catalyses the reaction GTP = 3',5'-cyclic GMP + diphosphate. With respect to regulation, activated by nitric oxide in the presence of magnesium or manganese ions. This is Guanylate cyclase soluble subunit alpha-1 (Gucy1a1) from Rattus norvegicus (Rat).